Reading from the N-terminus, the 353-residue chain is uncharacterized protein (353 aa).

3 disordered regions span residues 1–24 (MSTS…QQSQ), 245–280 (NKSS…EKVP), and 305–353 (AAGK…DLNN). Residues 9-24 (NKKNNTKQQKYQQQSQ) show a composition bias toward low complexity. Residues 254-280 (KSGDKSTVKSTDKQVEKKVEESSEKVP) show a composition bias toward basic and acidic residues. Positions 321-332 (VTTSTSESTVEV) are enriched in low complexity. A compositionally biased stretch (acidic residues) spans 342–353 (EPDEEVFEDLNN).

This is an uncharacterized protein from Acanthamoeba polyphaga mimivirus (APMV).